The primary structure comprises 285 residues: Probable endonuclease 4 (285 aa).

Positions 69, 109, 145, 179, 182, 216, 229, 231, and 261 each coordinate Zn(2+).

It belongs to the AP endonuclease 2 family. Zn(2+) serves as cofactor.

It carries out the reaction Endonucleolytic cleavage to 5'-phosphooligonucleotide end-products.. Endonuclease IV plays a role in DNA repair. It cleaves phosphodiester bonds at apurinic or apyrimidinic (AP) sites, generating a 3'-hydroxyl group and a 5'-terminal sugar phosphate. The chain is Probable endonuclease 4 from Salmonella paratyphi C (strain RKS4594).